The primary structure comprises 1785 residues: Mellein synthase (1785 aa).

Positions 1–36 (MATPDDPATPALSLSASNSSSPTAASSVPPPTGTSE) are disordered. Low complexity predominate over residues 8-27 (ATPALSLSASNSSSPTAASS). Residues 39-464 (YDDVAIIGMS…GTVSHAIIEQ (426 aa)) enclose the Ketosynthase family 3 (KS3) domain. Active-site for beta-ketoacyl synthase activity residues include cysteine 211, histidine 346, and histidine 386. The segment at 575 to 888 (VWVFSGHGSH…AVAQLWTKGV (314 aa)) is malonyl-CoA:ACP transacylase (MAT) domain. Catalysis depends on serine 661, which acts as the For malonyltransferase activity. The tract at residues 933-1047 (NNMLGQRMVV…ASWENEPSAN (115 aa)) is N-terminal hotdog fold. The region spanning 933–1206 (NNMLGQRMVV…FTEVEATPTK (274 aa)) is the PKS/mFAS DH domain. Positions 935–1203 (MLGQRMVVAG…SIRFTEVEAT (269 aa)) are dehydratase (DH) domain. The active-site Proton acceptor; for dehydratase activity is the histidine 965. The C-terminal hotdog fold stretch occupies residues 1062–1206 (GTRVSETFSV…FTEVEATPTK (145 aa)). Aspartate 1123 (proton donor; for dehydratase activity) is an active-site residue. Residues 1418 to 1608 (GTYVLTGGLG…AIAFQWTAWR (191 aa)) are ketoreductase (KR) domain. The segment covering 1681-1698 (QDQSAPASGNASDSSGRP) has biased composition (polar residues). Positions 1681-1701 (QDQSAPASGNASDSSGRPTAS) are disordered. A Carrier domain is found at 1706–1781 (PWLDVKIREC…AMVGWFQKQF (76 aa)). Serine 1741 carries the post-translational modification O-(pantetheine 4'-phosphoryl)serine.

It functions in the pathway secondary metabolite biosynthesis. Polyketide synthase that produces (R)-mellein, a secondary metabolite that inhibits the germination of wheat (Triticum aestivum) and barrel medic (Medicago truncatula) seeds. Condensates 1 acetate starter unit and 4 extender malonate units. The nascent pentaketide intermediate then undergoes an aldol cyclization and is aromatized via dehydration. The (R)-O-methylmellein isolated from P.nodorum is most likely to be derived from (R)-mellein via an additional methylation at the hydroxyl group. Interestingly, no O-methyltransferase gene is encoded in the vicinity of MLNS on the chromosome. Thus, the O-methylation is likely to be catalyzed by an endogenous O-methyltransferase encoded elsewhere in the genome of P.nodorum. This is Mellein synthase from Phaeosphaeria nodorum (strain SN15 / ATCC MYA-4574 / FGSC 10173) (Glume blotch fungus).